The primary structure comprises 158 residues: Small ribosomal subunit protein uS9 (158 aa).

This sequence belongs to the universal ribosomal protein uS9 family.

This chain is Small ribosomal subunit protein uS9, found in Brucella melitensis biotype 2 (strain ATCC 23457).